A 129-amino-acid polypeptide reads, in one-letter code: Large ribosomal subunit protein uL22 (129 aa).

It belongs to the universal ribosomal protein uL22 family. In terms of assembly, part of the 50S ribosomal subunit.

Functionally, this protein binds specifically to 23S rRNA; its binding is stimulated by other ribosomal proteins, e.g. L4, L17, and L20. It is important during the early stages of 50S assembly. It makes multiple contacts with different domains of the 23S rRNA in the assembled 50S subunit and ribosome. In terms of biological role, the globular domain of the protein is located near the polypeptide exit tunnel on the outside of the subunit, while an extended beta-hairpin is found that lines the wall of the exit tunnel in the center of the 70S ribosome. This is Large ribosomal subunit protein uL22 from Sinorhizobium medicae (strain WSM419) (Ensifer medicae).